A 298-amino-acid polypeptide reads, in one-letter code: Glycine--tRNA ligase alpha subunit (298 aa).

It belongs to the class-II aminoacyl-tRNA synthetase family. As to quaternary structure, tetramer of two alpha and two beta subunits.

It localises to the cytoplasm. It carries out the reaction tRNA(Gly) + glycine + ATP = glycyl-tRNA(Gly) + AMP + diphosphate. The chain is Glycine--tRNA ligase alpha subunit from Neisseria meningitidis serogroup C / serotype 2a (strain ATCC 700532 / DSM 15464 / FAM18).